The following is a 251-amino-acid chain: Triosephosphate isomerase, glycosomal (251 aa).

2 residues coordinate substrate: Asn12 and Lys14. The active-site Electrophile is the His96. The active-site Proton acceptor is Glu168.

The protein belongs to the triosephosphate isomerase family. In terms of assembly, homodimer.

It localises to the glycosome. The catalysed reaction is D-glyceraldehyde 3-phosphate = dihydroxyacetone phosphate. It functions in the pathway carbohydrate biosynthesis; gluconeogenesis. The protein operates within carbohydrate degradation; glycolysis; D-glyceraldehyde 3-phosphate from glycerone phosphate: step 1/1. The chain is Triosephosphate isomerase, glycosomal from Trypanosoma cruzi.